The primary structure comprises 241 residues: ATP synthase subunit a (241 aa).

A run of 5 helical transmembrane segments spans residues 23–43 (VSFT…AAFF), 83–103 (YFPY…LGML), 113–133 (IAVT…IGFA), 188–208 (VLAG…FAVV), and 209–229 (LGVT…FTIL).

The protein belongs to the ATPase A chain family. In terms of assembly, F-type ATPases have 2 components, CF(1) - the catalytic core - and CF(0) - the membrane proton channel. CF(1) has five subunits: alpha(3), beta(3), gamma(1), delta(1), epsilon(1). CF(0) has four main subunits: a, b, b' and c.

Its subcellular location is the cell inner membrane. In terms of biological role, key component of the proton channel; it plays a direct role in the translocation of protons across the membrane. The sequence is that of ATP synthase subunit a from Rhodospirillum rubrum (strain ATCC 11170 / ATH 1.1.1 / DSM 467 / LMG 4362 / NCIMB 8255 / S1).